The primary structure comprises 893 residues: Pentatricopeptide repeat-containing protein At5g52850, chloroplastic (893 aa).

PPR repeat units follow at residues 57-87 (NLDLCNNLLSLYLKTDGIWNARKLFDEMSHR), 88-122 (TVFAWTVMISAFTKSQEFASALSLFEEMMASGTHP), 123-157 (NEFTFSSVVRSCAGLRDISYGGRVHGSVIKTGFEG), 158-188 (NSVVGSSLSDLYSKCGQFKEACELFSSLQNA), 189-223 (DTISWTMMISSLVGARKWREALQFYSEMVKAGVPP), 224-257 (NEFTFVKLLGASSFLGLEFGKTIHSNIIVRGIPL), 258-288 (NVVLKTSLVDFYSQFSKMEDAVRVLNSSGEQ), 289-323 (DVFLWTSVVSGFVRNLRAKEAVGTFLEMRSLGLQP), 324-358 (NNFTYSAILSLCSAVRSLDFGKQIHSQTIKVGFED), 359-390 (STDVGNALVDMYMKCSASEVEASRVFGAMVSP), 391-425 (NVVSWTTLILGLVDHGFVQDCFGLLMEMVKREVEP), 426-460 (NVVTLSGVLRACSKLRHVRRVLEIHAYLLRRHVDG), 461-491 (EMVVGNSLVDAYASSRKVDYAWNVIRSMKRR), 492-526 (DNITYTSLVTRFNELGKHEMALSVINYMYGDGIRM), 527-561 (DQLSLPGFISASANLGALETGKHLHCYSVKSGFSG), 562-592 (AASVLNSLVDMYSKCGSLEDAKKVFEEIATP), 593-627 (DVVSWNGLVSGLASNGFISSALSAFEEMRMKETEP), 628-658 (DSVTFLILLSACSNGRLTDLGLEYFQVMKKI), and 664-694 (QVEHYVHLVGILGRAGRLEEATGVVETMHLK). The segment at 699–774 (IFKTLLRACR…KLGKSTVEVQ (76 aa)) is type E motif. The tract at residues 775-806 (GKVHSFVSEDVTRVDKTNGIYAEIESIKEEIK) is type E(+) motif. Positions 807–893 (RFGSPYRGNE…SCKREETSFV (87 aa)) are type DYW motif.

Belongs to the PPR family. PCMP-H subfamily.

The protein resides in the plastid. It localises to the chloroplast. The polypeptide is Pentatricopeptide repeat-containing protein At5g52850, chloroplastic (PCMP-H31) (Arabidopsis thaliana (Mouse-ear cress)).